The chain runs to 124 residues: Large ribosomal subunit protein bL12 (124 aa).

The protein belongs to the bacterial ribosomal protein bL12 family. Homodimer. Part of the ribosomal stalk of the 50S ribosomal subunit. Forms a multimeric L10(L12)X complex, where L10 forms an elongated spine to which 2 to 4 L12 dimers bind in a sequential fashion. Binds GTP-bound translation factors.

Its function is as follows. Forms part of the ribosomal stalk which helps the ribosome interact with GTP-bound translation factors. Is thus essential for accurate translation. This chain is Large ribosomal subunit protein bL12, found in Christiangramia forsetii (strain DSM 17595 / CGMCC 1.15422 / KT0803) (Gramella forsetii).